A 949-amino-acid chain; its full sequence is Collagen alpha-2(I) chain (949 aa).

Residues 1–949 are disordered; that stretch reads SGGFDFSFLP…FGYEGDFYRA (949 aa). Proline 10, proline 13, proline 34, and proline 40 each carry 4-hydroxyproline. Residues 27–66 show a composition bias toward low complexity; the sequence is LMGPRGPPGASGAPGPQGFQGPAGEPGEPGQTGPAGARGP. At lysine 95 the chain carries 5-hydroxylysine; alternate. An O-linked (Gal...) hydroxylysine; alternate glycan is attached at lysine 95. 2 stretches are compositionally biased toward low complexity: residues 147 to 162 and 208 to 229; these read SVGP…SAGP and PGAN…AGAP. Residues 263–272 show a composition bias toward gly residues; sequence GESGGKGEPG. Over residues 273 to 283 the composition is skewed to low complexity; that stretch reads SAGPQGPPGSS. The segment covering 292–313 has biased composition (gly residues); sequence NGEGSTGPTGPPGLRGGPGSRG. Proline 348 and proline 351 each carry 4-hydroxyproline. Over residues 377–396 the composition is skewed to low complexity; that stretch reads LPGIDGRPGPIGPAGARGEA. The segment covering 435–444 has biased composition (gly residues); sequence GVQGGKGEQG. 2 stretches are compositionally biased toward low complexity: residues 490-507 and 519-529; these read PGES…SRGP and EPGVVGAPGTA. Residues 530-539 show a composition bias toward gly residues; that stretch reads GPAGSGGLPG. Composition is skewed to low complexity over residues 562-606 and 613-633; these read VGTT…PRGS and VGPA…QPGA. Residues 634–643 show a composition bias toward basic and acidic residues; that stretch reads KGERGTKGPK. Over residues 651-661 the composition is skewed to low complexity; that stretch reads PTGPVGSAGPA. Over residues 671–680 the composition is skewed to gly residues; sequence GSRGDGGPPG. The segment covering 682–691 has biased composition (low complexity); the sequence is TGFPGAAGRT. Positions 722–736 are enriched in gly residues; it reads GPVGRGETGAGGPPG. Composition is skewed to low complexity over residues 737 to 771, 779 to 792, and 810 to 825; these read FTGE…LGLP, LPGV…PGPL, and EPGP…ALGP. Residues 835–846 show a composition bias toward basic and acidic residues; the sequence is RGDKGEPGEKGP. The segment covering 921–931 has biased composition (pro residues); the sequence is PAGPPGPPGPP.

Belongs to the fibrillar collagen family. Trimers of one alpha 2(I) and two alpha 1(I) chains. Interacts (via C-terminus) with TMEM131 (via PapD-L domain); the interaction is direct and is involved in assembly and TRAPPIII ER-to-Golgi transport complex-dependent secretion of collagen. Post-translationally, prolines at the third position of the tripeptide repeating unit (G-X-Y) are hydroxylated in some or all of the chains. Expressed in bones.

It is found in the secreted. The protein localises to the extracellular space. It localises to the extracellular matrix. In terms of biological role, type I collagen is a member of group I collagen (fibrillar forming collagen). This chain is Collagen alpha-2(I) chain, found in Acratocnus ye (Hispaniolan ground sloth).